The primary structure comprises 147 residues: Large ribosomal subunit protein uL15 (147 aa).

Residues 1–15 (MTDRVKKTRKLRGHV) are compositionally biased toward basic residues. The segment at 1–34 (MTDRVKKTRKLRGHVSHGYGRVGKHRKHSGGRGL) is disordered.

The protein belongs to the universal ribosomal protein uL15 family.

The chain is Large ribosomal subunit protein uL15 (RPL27A) from Encephalitozoon cuniculi (strain GB-M1) (Microsporidian parasite).